The chain runs to 146 residues: UPF0735 ACT domain-containing protein Cbei_1295 (146 aa).

In terms of domain architecture, ACT spans Thr70–Met145.

The protein belongs to the UPF0735 family.

This is UPF0735 ACT domain-containing protein Cbei_1295 from Clostridium beijerinckii (strain ATCC 51743 / NCIMB 8052) (Clostridium acetobutylicum).